Consider the following 459-residue polypeptide: ATP synthase subunit beta (459 aa).

149 to 156 (GGAGVGKT) contacts ATP.

The protein belongs to the ATPase alpha/beta chains family. F-type ATPases have 2 components, CF(1) - the catalytic core - and CF(0) - the membrane proton channel. CF(1) has five subunits: alpha(3), beta(3), gamma(1), delta(1), epsilon(1). CF(0) has three main subunits: a(1), b(2) and c(9-12). The alpha and beta chains form an alternating ring which encloses part of the gamma chain. CF(1) is attached to CF(0) by a central stalk formed by the gamma and epsilon chains, while a peripheral stalk is formed by the delta and b chains.

The protein localises to the cell inner membrane. The enzyme catalyses ATP + H2O + 4 H(+)(in) = ADP + phosphate + 5 H(+)(out). Produces ATP from ADP in the presence of a proton gradient across the membrane. The catalytic sites are hosted primarily by the beta subunits. In Pseudomonas syringae pv. tomato (strain ATCC BAA-871 / DC3000), this protein is ATP synthase subunit beta.